The following is a 304-amino-acid chain: GTPase Era (304 aa).

The Era-type G domain maps to 11–179 (YCGFIAIVGR…QKIVRKSLRE (169 aa)). Residues 19–26 (GRPNVGKS) are G1. 19-26 (GRPNVGKS) lines the GTP pocket. Positions 45–49 (QTTRH) are G2. Residues 66 to 69 (DTPG) form a G3 region. Residues 66–70 (DTPGL) and 128–131 (NKVD) each bind GTP. Positions 128–131 (NKVD) are G4. Positions 158–160 (ISA) are G5. One can recognise a KH type-2 domain in the interval 210–287 (TGEELPYSVT…HLELWVKVKA (78 aa)).

It belongs to the TRAFAC class TrmE-Era-EngA-EngB-Septin-like GTPase superfamily. Era GTPase family. Monomer.

The protein resides in the cytoplasm. It localises to the cell inner membrane. In terms of biological role, an essential GTPase that binds both GDP and GTP, with rapid nucleotide exchange. Plays a role in 16S rRNA processing and 30S ribosomal subunit biogenesis and possibly also in cell cycle regulation and energy metabolism. The protein is GTPase Era of Actinobacillus pleuropneumoniae serotype 3 (strain JL03).